Reading from the N-terminus, the 279-residue chain is Pantothenate synthetase (279 aa).

26–33 lines the ATP pocket; it reads MGNLHDGH. The active-site Proton donor is histidine 33. Glutamine 57 provides a ligand contact to (R)-pantoate. Glutamine 57 lines the beta-alanine pocket. 144-147 provides a ligand contact to ATP; it reads GKKD. (R)-pantoate is bound at residue glutamine 150. Residues valine 173 and 181-184 each bind ATP; that span reads LSSR.

The protein belongs to the pantothenate synthetase family. Homodimer.

Its subcellular location is the cytoplasm. The enzyme catalyses (R)-pantoate + beta-alanine + ATP = (R)-pantothenate + AMP + diphosphate + H(+). Its pathway is cofactor biosynthesis; (R)-pantothenate biosynthesis; (R)-pantothenate from (R)-pantoate and beta-alanine: step 1/1. In terms of biological role, catalyzes the condensation of pantoate with beta-alanine in an ATP-dependent reaction via a pantoyl-adenylate intermediate. The chain is Pantothenate synthetase from Burkholderia mallei (strain NCTC 10229).